Here is a 238-residue protein sequence, read N- to C-terminus: Uridylate kinase (238 aa).

11 to 14 (KLSG) lines the ATP pocket. Gly52 is a binding site for UMP. ATP-binding residues include Gly53 and Arg57. UMP-binding positions include Asp72 and 134–141 (TGFSYFTT). Residues Asn162, Tyr168, and Asp171 each contribute to the ATP site.

This sequence belongs to the UMP kinase family. Homohexamer.

It localises to the cytoplasm. The catalysed reaction is UMP + ATP = UDP + ADP. The protein operates within pyrimidine metabolism; CTP biosynthesis via de novo pathway; UDP from UMP (UMPK route): step 1/1. With respect to regulation, inhibited by UTP. Its function is as follows. Catalyzes the reversible phosphorylation of UMP to UDP. The sequence is that of Uridylate kinase from Mesoplasma florum (strain ATCC 33453 / NBRC 100688 / NCTC 11704 / L1) (Acholeplasma florum).